A 720-amino-acid polypeptide reads, in one-letter code: MKSLHVAANAGDLAEDCGILGGDADDTVLMDGIDEVGREIWLDDHGGDNNHVHGHQDDDLIVHHDPSIFYGDLPTLPDFPCMSSSSSSSTSPAPVNAIVSSASSSSAASSSTSSAASWAILRSDGEDPTPNQNQYASGNCDDSSGALQSTASMEIPLDSSQGFGCGEGGGDCIDMMETFGYMDLLDSNEFFDTSAIFSQDDDTQNPNLMDQTLERQEDQVVVPMMENNSGGDMQMMNSSLEQDDDLAAVFLEWLKNNKETVSAEDLRKVKIKKATIESAARRLGGGKEAMKQLLKLILEWVQTNHLQRRRTTTTTTNLSYQQSFQQDPFQNPNPNNNNLIPPSDQTCFSPSTWVPPPPQQQAFVSDPGFGYMPAPNYPPQPEFLPLLESPPSWPPPPQSGPMPHQQFPMPPTSQYNQFGDPTGFNGYNMNPYQYPYVPAGQMRDQRLLRLCSSATKEARKKRMARQRRFLSHHHRHNNNNNNNNNNQQNQTQIGETCAAVAPQLNPVATTATGGTWMYWPNVPAVPPQLPPVMETQLPTMDRAGSASAMPRQQVVPDRRQGWKPEKNLRFLLQKVLKQSDVGNLGRIVLPKKEAETHLPELEARDGISLAMEDIGTSRVWNMRYRFWPNNKSRMYLLENTGDFVKTNGLQEGDFIVIYSDVKCGKYLIRGVKVRQPSGQKPEAPPSSAATKRQNKSQRNINNNSPSANVVVASPTSQTVK.

Disordered stretches follow at residues 122 to 146 and 324 to 360; these read RSDG…SSGA and FQQD…PPQQ. A compositionally biased stretch (polar residues) spans 129-146; the sequence is TPNQNQYASGNCDDSSGA. The segment covering 324-344 has biased composition (low complexity); sequence FQQDPFQNPNPNNNNLIPPSD. A DNA-binding region (TF-B3) is located at residues 572–674; the sequence is LQKVLKQSDV…KYLIRGVKVR (103 aa). The interval 675 to 720 is disordered; that stretch reads QPSGQKPEAPPSSAATKRQNKSQRNINNNSPSANVVVASPTSQTVK. Residues 687 to 700 show a composition bias toward polar residues; that stretch reads SAATKRQNKSQRNI. Positions 701 to 714 are enriched in low complexity; it reads NNNSPSANVVVASP.

In terms of assembly, interacts (via C-terminus) with SPK1, SCAR3, ABI5, APRR1, AIP2, AIP3 and AIP4. Binds to BZIP10 and BZIP25 and forms complexes made of ABI3, BZIP53 and BZIP25 or BZIP10. Post-translationally, ubiquitinated by AIP2. Ubiquitination probably leads to its subsequent degradation, thus negatively regulating ABA signaling. Isoform 2 accumulates only at the end of seed maturation.

It is found in the nucleus. The protein localises to the cytoplasm. Its function is as follows. Participates in abscisic acid-regulated gene expression during seed development. Regulates the transcription of SGR1 and SGR2 that are involved in leaf and embryo degreening. In Arabidopsis thaliana (Mouse-ear cress), this protein is B3 domain-containing transcription factor ABI3 (ABI3).